We begin with the raw amino-acid sequence, 379 residues long: Phospholipase A1 (379 aa).

The first 20 residues, 1–20 (MKFITAILVIFCVYLLSTAG), serve as a signal peptide directing secretion. The propeptide occupies 21-73 (DSKILPLKKLPSKIFGHLKSHVDNTVKKPLKVFGHLKSHVENSVGPLRMNKLT). A disulfide bridge connects residues C76 and C154. N126 carries an N-linked (GlcNAc...) asparagine glycan. The active-site Nucleophile is S204. Residue D232 is the Charge relay system of the active site. Intrachain disulfides connect C243–C248 and C285–C291. H293 acts as the Charge relay system in catalysis.

Belongs to the AB hydrolase superfamily. Lipase family. In terms of processing, contains five disulfide bonds. As to expression, expressed by the venom gland.

The protein localises to the secreted. It catalyses the reaction a 1,2-diacyl-sn-glycero-3-phosphocholine + H2O = a 2-acyl-sn-glycero-3-phosphocholine + a fatty acid + H(+). Its function is as follows. Catalyzes the hydrolysis of phosphatidylcholine with phospholipase A1 activity. May act as an allergen and induce hemolytic activity. In Dinoponera quadriceps (South American ant), this protein is Phospholipase A1.